Reading from the N-terminus, the 306-residue chain is Phenylcoumaran benzylic ether reductase POP1 (306 aa).

NADP(+)-binding positions include Gly-9–Gly-15, Arg-34, and Lys-43. Catalysis depends on Lys-131, which acts as the Proton acceptor. Residue Arg-135 participates in NADP(+) binding.

The protein belongs to the NmrA-type oxidoreductase family. Isoflavone reductase subfamily.

The enzyme catalyses (-)-dehydrodiconiferyl alcohol + NADPH + H(+) = (S)-isodihydrodehydrodiconiferyl alcohol + NADP(+). The catalysed reaction is (+)-dehydrodiconiferyl alcohol + NADPH + H(+) = (R)-isodihydrodehydrodiconiferyl alcohol + NADP(+). It catalyses the reaction (2R,3S)-dihydrodehydrodiconiferyl alcohol + NADPH + H(+) = (S)-tetrahydrodehydrodiconiferyl alcohol + NADP(+). It carries out the reaction (2S,3R)-dihydrodehydrodiconiferyl alcohol + NADPH + H(+) = (R)-tetrahydrodehydrodiconiferyl alcohol + NADP(+). Functionally, oxidoreductase involved in lignan biosynthesis. Catalyzes the NADPH-dependent reduction of phenylcoumaran benzylic ethers. Converts dehydrodiconiferyl alcohol (DDC) to isodihydrodehydrodiconiferyl alcohol (IDDDC), and dihydrodehydrodiconiferyl alcohol (DDDC) to tetrahydrodehydrodiconiferyl alcohol (TDDC). This Populus trichocarpa (Western balsam poplar) protein is Phenylcoumaran benzylic ether reductase POP1.